The sequence spans 798 residues: Phenylalanine--tRNA ligase beta subunit (798 aa).

Residues 39–148 enclose the tRNA-binding domain; it reads FDAIEPIVVG…ESFRIGARLV (110 aa). In terms of domain architecture, B5 spans 402-478; that stretch reads WQAPVLRFRR…RVRGMDTIEP (77 aa). Positions 456, 462, 465, and 466 each coordinate Mg(2+). Residues 708–798 enclose the FDX-ACB domain; sequence PVYPPVRRDI…SLVEKLPVRI (91 aa).

The protein belongs to the phenylalanyl-tRNA synthetase beta subunit family. Type 1 subfamily. As to quaternary structure, tetramer of two alpha and two beta subunits. Requires Mg(2+) as cofactor.

Its subcellular location is the cytoplasm. It catalyses the reaction tRNA(Phe) + L-phenylalanine + ATP = L-phenylalanyl-tRNA(Phe) + AMP + diphosphate + H(+). In Nitratidesulfovibrio vulgaris (strain ATCC 29579 / DSM 644 / CCUG 34227 / NCIMB 8303 / VKM B-1760 / Hildenborough) (Desulfovibrio vulgaris), this protein is Phenylalanine--tRNA ligase beta subunit.